We begin with the raw amino-acid sequence, 447 residues long: Tubulin beta chain (447 aa).

Residues Gln-11, Glu-69, Ser-138, Gly-142, Thr-143, Gly-144, Asn-204, and Asn-226 each contribute to the GTP site. Glu-69 serves as a coordination point for Mg(2+). The disordered stretch occupies residues 424–447 (QYQEASVSDAEEEYDEEAPLEGEE). Residues 432-447 (DAEEEYDEEAPLEGEE) are compositionally biased toward acidic residues.

The protein belongs to the tubulin family. Dimer of alpha and beta chains. A typical microtubule is a hollow water-filled tube with an outer diameter of 25 nm and an inner diameter of 15 nM. Alpha-beta heterodimers associate head-to-tail to form protofilaments running lengthwise along the microtubule wall with the beta-tubulin subunit facing the microtubule plus end conferring a structural polarity. Microtubules usually have 13 protofilaments but different protofilament numbers can be found in some organisms and specialized cells. Mg(2+) is required as a cofactor.

It localises to the cytoplasm. The protein resides in the cytoskeleton. Functionally, tubulin is the major constituent of microtubules, a cylinder consisting of laterally associated linear protofilaments composed of alpha- and beta-tubulin heterodimers. Microtubules grow by the addition of GTP-tubulin dimers to the microtubule end, where a stabilizing cap forms. Below the cap, tubulin dimers are in GDP-bound state, owing to GTPase activity of alpha-tubulin. This Zymoseptoria tritici (Speckled leaf blotch fungus) protein is Tubulin beta chain (TUB1).